We begin with the raw amino-acid sequence, 279 residues long: Eukaryotic translation initiation factor 3 subunit J (279 aa).

Disordered stretches follow at residues 1–74 and 229–279; these read MSWD…SQKS and ERQA…DDFM. Residues 20 to 39 show a composition bias toward acidic residues; it reads WEDEDNDDPLLESWDIDEEE. Positions 34–74 form a coiled coil; it reads DIDEEEVARKKKEEEAKKKAEKEALKQKQQEAKNKKLSQKS. Over residues 40 to 67 the composition is skewed to basic and acidic residues; the sequence is VARKKKEEEAKKKAEKEALKQKQQEAKN. The span at 268–279 shows a compositional bias: acidic residues; sequence DDFDDFDDDDFM.

The protein belongs to the eIF-3 subunit J family. As to quaternary structure, component of the eukaryotic translation initiation factor 3 (eIF-3) complex.

The protein resides in the cytoplasm. In terms of biological role, component of the eukaryotic translation initiation factor 3 (eIF-3) complex, which is involved in protein synthesis of a specialized repertoire of mRNAs and, together with other initiation factors, stimulates binding of mRNA and methionyl-tRNAi to the 40S ribosome. The eIF-3 complex specifically targets and initiates translation of a subset of mRNAs involved in cell proliferation. The chain is Eukaryotic translation initiation factor 3 subunit J from Meyerozyma guilliermondii (strain ATCC 6260 / CBS 566 / DSM 6381 / JCM 1539 / NBRC 10279 / NRRL Y-324) (Yeast).